Consider the following 689-residue polypeptide: Glycine--tRNA ligase beta subunit (689 aa).

This sequence belongs to the class-II aminoacyl-tRNA synthetase family. Tetramer of two alpha and two beta subunits.

It is found in the cytoplasm. It carries out the reaction tRNA(Gly) + glycine + ATP = glycyl-tRNA(Gly) + AMP + diphosphate. In Shigella boydii serotype 4 (strain Sb227), this protein is Glycine--tRNA ligase beta subunit.